Here is a 228-residue protein sequence, read N- to C-terminus: Urease accessory protein UreF (228 aa).

Belongs to the UreF family. As to quaternary structure, ureD, UreF and UreG form a complex that acts as a GTP-hydrolysis-dependent molecular chaperone, activating the urease apoprotein by helping to assemble the nickel containing metallocenter of UreC. The UreE protein probably delivers the nickel.

The protein resides in the cytoplasm. Its function is as follows. Required for maturation of urease via the functional incorporation of the urease nickel metallocenter. The protein is Urease accessory protein UreF of Photorhabdus laumondii subsp. laumondii (strain DSM 15139 / CIP 105565 / TT01) (Photorhabdus luminescens subsp. laumondii).